The sequence spans 442 residues: Transposase InsG for insertion sequence element IS4 (442 aa).

Belongs to the transposase 11 family.

Functionally, involved in the transposition of the insertion sequence IS4. The sequence is that of Transposase InsG for insertion sequence element IS4 (insG) from Escherichia coli (strain K12).